The sequence spans 522 residues: Transcription factor SPT20 homolog (522 aa).

Ser284 carries the phosphoserine modification. Disordered regions lie at residues 361–380 and 408–522; these read DEESDSQMSPSHSSTDDHSN and PVKM…RHES. The segment covering 412–425 has biased composition (low complexity); it reads SHSSSGSASLSQVS. Polar residues predominate over residues 433–442; that stretch reads TETVSVQSSV. Residues 458–467 are compositionally biased toward low complexity; the sequence is SSSGNSSSGN. A compositionally biased stretch (pro residues) spans 481–492; the sequence is PTPPPSSKPPTI. A Phosphothreonine modification is found at Thr482. Residues 506 to 522 are compositionally biased toward low complexity; it reads LSPAALSPASSSQRHES. Phosphoserine occurs at positions 507 and 512.

The protein belongs to the SPT20 family. In terms of assembly, interacts with ATG9A. Interacts with MAPK14.

Required for MAP kinase p38 (MAPK11, MAPK12, MAPK13 and/or MAPK14) activation during gastrulation. Required for down-regulation of E-cadherin during gastrulation by regulating E-cadherin protein level downstream from NCK-interacting kinase (NIK) and independently of the regulation of transcription by FGF signaling and Snail. Required for starvation-induced ATG9A trafficking during autophagy. This Pongo abelii (Sumatran orangutan) protein is Transcription factor SPT20 homolog (SUPT20H).